Reading from the N-terminus, the 498-residue chain is Galactose-1-phosphate uridylyltransferase (498 aa).

The protein belongs to the galactose-1-phosphate uridylyltransferase type 2 family.

It is found in the cytoplasm. The enzyme catalyses alpha-D-galactose 1-phosphate + UDP-alpha-D-glucose = alpha-D-glucose 1-phosphate + UDP-alpha-D-galactose. Its pathway is carbohydrate metabolism; galactose metabolism. This is Galactose-1-phosphate uridylyltransferase from Clostridium perfringens (strain 13 / Type A).